The following is a 401-amino-acid chain: Dynactin subunit 2 (401 aa).

A disordered region spans residues 1 to 25 (MADPKYADLPGIARNEPDVYETSDL). Alanine 2 carries the post-translational modification N-acetylalanine. A Phosphotyrosine modification is found at tyrosine 6. Serine 83 is subject to Phosphoserine. Tyrosine 86 bears the Phosphotyrosine mark. A coiled-coil region spans residues 99–132 (PQQKYQRLLHEVQELTTEVEKIKTTVKESATEEK). 2 positions are modified to phosphothreonine: threonine 134 and threonine 198. Residues 214–244 (EQDKFSQAAKVAELEKRLTELETAVRCDQDA) are a coiled coil. Serine 320 carries the phosphoserine modification. Residues 379–399 (RENLATVEGNFASIDERMKKL) adopt a coiled-coil conformation.

The protein belongs to the dynactin subunit 2 family. Subunit of dynactin, a multiprotein complex part of a tripartite complex with dynein and a adapter, such as BICDL1, BICD2 or HOOK3. The dynactin complex is built around ACTR1A/ACTB filament and consists of an actin-related filament composed of a shoulder domain, a pointed end and a barbed end. Its length is defined by its flexible shoulder domain. The soulder is composed of 2 DCTN1 subunits, 4 DCTN2 and 2 DCTN3. The 4 DCNT2 (via N-terminus) bind the ACTR1A filament and act as molecular rulers to determine the length. The pointed end is important for binding dynein-dynactin cargo adapters and consists of 4 subunits: ACTR10, DCNT4, DCTN5 and DCTN6. The barbed end is composed of a CAPZA1:CAPZB heterodimers, which binds ACTR1A/ACTB filament and dynactin and stabilizes dynactin. Interacts with BICD2 and CEP135. Interacts with DYNAP. Interacts with ECPAS. Interacts with MAPRE1.

It is found in the cytoplasm. Its subcellular location is the cytoskeleton. It localises to the microtubule organizing center. The protein localises to the centrosome. The protein resides in the membrane. Functionally, part of the dynactin complex that activates the molecular motor dynein for ultra-processive transport along microtubules. In the dynactin soulder domain, binds the ACTR1A filament and acts as a molecular ruler to determine the length. Modulates cytoplasmic dynein binding to an organelle, and plays a role in prometaphase chromosome alignment and spindle organization during mitosis. Involved in anchoring microtubules to centrosomes. May play a role in synapse formation during brain development. In Homo sapiens (Human), this protein is Dynactin subunit 2.